The chain runs to 562 residues: MDSQVPNNNESLNRFNDIIQSLPARTRLTICSLCLLDNISTQLLRFLILNANSPNIIAVLTDQTAFLSSGETEIFQTLVKLFKQIRMIYHTRSPLLSVHDVAPGLWFPNSPPPLILRGHEAFIITAIRKANLLTFLLTSLNCLNYGFELLQSIFLDIFCPNTNTVGNNSLEQSGKFLKSQAILYLDLKTQAYIAGLKEFQDETNEISLEKKQELLDLIFPSNLADILVQRRTGDSGDITLLTPSEKDFVERCDRRRENLKIVQDFNSLTQSYEWAQFIRELLDYCNKNMGLIIWGRKGRGKSPLYDFDVNEFDPQVLFSTGTRTVEFMDDQNQPSSASAFLSTARPNHYSTHTPTTDVSSKNPAITQSIVDAAVAASMSNSSSGPHSSHNNSSNSNNNGSIGLRKPKAKRTWSKEEEEALVEGLKEVGPSWSKILDLYGPGGKITENLKNRTQVQLKDKARNWKLQYLKSGKPLPDYLIKVTGNLEKIYKAKKKFSQSPNSSTIMEQNLSQHPSSAASATEDTQTHQEDSHGQNSDNMPSNGLFGNSTSDNTGFDPHLEDGM.

Residues 376 to 414 (ASMSNSSSGPHSSHNNSSNSNNNGSIGLRKPKAKRTWSK) are disordered. Positions 377–400 (SMSNSSSGPHSSHNNSSNSNNNGS) are enriched in low complexity. Residues 404–460 (RKPKAKRTWSKEEEEALVEGLKEVGPSWSKILDLYGPGGKITENLKNRTQVQLKDKA) enclose the HTH myb-type domain. Residues 431 to 456 (WSKILDLYGPGGKITENLKNRTQVQL) constitute a DNA-binding region (H-T-H motif). Residues 495–562 (FSQSPNSSTI…GFDPHLEDGM (68 aa)) form a disordered region. Composition is skewed to polar residues over residues 496-522 (SQSPNSSTIMEQNLSQHPSSAASATED) and 532-552 (GQNSDNMPSNGLFGNSTSDNT).

Homodimer.

The protein resides in the nucleus. It is found in the chromosome. The protein localises to the telomere. In terms of biological role, binds the telomeric double-stranded TTAGGG repeat and negatively regulates telomere length. Involved in the regulation of gene expression. 52 binding sites have been identified, distributed over 15 chromosomes. A member of the general regulatory factors (GRFs) which act as genome partitioners. Acts as a chromatin insulator which are known as STARs (Subtelomeric anti-silencing region). STARs prevent negative or positive transcription influence by extending across chromatin to a promoter. This chain is Protein TBF1 (TBF1), found in Saccharomyces cerevisiae (strain ATCC 204508 / S288c) (Baker's yeast).